Reading from the N-terminus, the 523-residue chain is Siroheme synthase (523 aa).

The interval 1-203 is precorrin-2 dehydrogenase /sirohydrochlorin ferrochelatase; that stretch reads MNTFPLFFKL…GNENEAIAQL (203 aa). Residues 22-23 and 43-44 each bind NAD(+); these read DV and PS. Ser128 is subject to Phosphoserine. The uroporphyrinogen-III C-methyltransferase stretch occupies residues 231 to 523; that stretch reads GEVYIVGAGP…DGGLEQLVID (293 aa). Position 240 (Pro240) interacts with S-adenosyl-L-methionine. The active-site Proton acceptor is the Asp263. Lys285 serves as the catalytic Proton donor. Residues 316-318, Ile321, 346-347, Met398, and Ala427 contribute to the S-adenosyl-L-methionine site; these read GGD and TA.

The protein in the N-terminal section; belongs to the precorrin-2 dehydrogenase / sirohydrochlorin ferrochelatase family. This sequence in the C-terminal section; belongs to the precorrin methyltransferase family.

It carries out the reaction uroporphyrinogen III + 2 S-adenosyl-L-methionine = precorrin-2 + 2 S-adenosyl-L-homocysteine + H(+). The enzyme catalyses precorrin-2 + NAD(+) = sirohydrochlorin + NADH + 2 H(+). It catalyses the reaction siroheme + 2 H(+) = sirohydrochlorin + Fe(2+). It functions in the pathway cofactor biosynthesis; adenosylcobalamin biosynthesis; precorrin-2 from uroporphyrinogen III: step 1/1. It participates in cofactor biosynthesis; adenosylcobalamin biosynthesis; sirohydrochlorin from precorrin-2: step 1/1. Its pathway is porphyrin-containing compound metabolism; siroheme biosynthesis; precorrin-2 from uroporphyrinogen III: step 1/1. The protein operates within porphyrin-containing compound metabolism; siroheme biosynthesis; siroheme from sirohydrochlorin: step 1/1. It functions in the pathway porphyrin-containing compound metabolism; siroheme biosynthesis; sirohydrochlorin from precorrin-2: step 1/1. Functionally, multifunctional enzyme that catalyzes the SAM-dependent methylations of uroporphyrinogen III at position C-2 and C-7 to form precorrin-2 via precorrin-1. Then it catalyzes the NAD-dependent ring dehydrogenation of precorrin-2 to yield sirohydrochlorin. Finally, it catalyzes the ferrochelation of sirohydrochlorin to yield siroheme. The polypeptide is Siroheme synthase (Psychrobacter cryohalolentis (strain ATCC BAA-1226 / DSM 17306 / VKM B-2378 / K5)).